Reading from the N-terminus, the 390-residue chain is Cell adhesion molecule 4 (390 aa).

Residues 1-27 form the signal peptide; it reads MAPALTALNRCFVLGILLLVTAGTAFS. The Ig-like V-type domain maps to 28–122; that stretch reads QEVQAENVTV…DTHHQIATLT (95 aa). The Extracellular portion of the chain corresponds to 28 to 326; sequence QEVQAENVTV…IEAQTQVPYA (299 aa). N-linked (GlcNAc...) asparagine glycosylation is found at asparagine 34 and asparagine 70. Cystine bridges form between cysteine 47-cysteine 107, cysteine 148-cysteine 202, and cysteine 247-cysteine 293. Ig-like C2-type domains lie at 127–219 and 226–309; these read PDNP…TQYE and PTAS…YVLV. Asparagine 264 and asparagine 288 each carry an N-linked (GlcNAc...) asparagine glycan. A helical membrane pass occupies residues 327 to 347; it reads VIGGILALLVFLVICILIVMV. The Cytoplasmic portion of the chain corresponds to 348–390; sequence WCSVRQKGSYLTHEASGLDEHGEAREAFLNGGENHKRKEEFFI.

This sequence belongs to the nectin family.

Its subcellular location is the membrane. Its function is as follows. Involved in the cell-cell adhesion. The chain is Cell adhesion molecule 4 (cadm4) from Xenopus laevis (African clawed frog).